The primary structure comprises 55 residues: MAKAATIKIKLLSTADTGFFYVTKKNSRTMTNKMSKRKYDPVVKRHVEFKETKIK.

This sequence belongs to the bacterial ribosomal protein bL33 family.

In Bartonella quintana (strain Toulouse) (Rochalimaea quintana), this protein is Large ribosomal subunit protein bL33.